The primary structure comprises 115 residues: uncharacterized protein (115 aa).

The next 3 helical transmembrane spans lie at 23–43 (LVYAALAFVGGFAVWFSLFFA), 63–83 (AMVTMWIGVGAVLLLTLVVMV), and 90–110 (NVVIGWPFVGLLALGLVYVAA).

It is found in the cell membrane. This is an uncharacterized protein from Mycobacterium bovis (strain ATCC BAA-935 / AF2122/97).